The sequence spans 382 residues: Neuropeptide Y receptor type 2 (382 aa).

Positions 1–39 (MGPIGAEADENQTVEEMKMEPSGPGHTTPRGELAPDSEP) are disordered. Residues 1 to 46 (MGPIGAEADENQTVEEMKMEPSGPGHTTPRGELAPDSEPELKDSTK) lie on the Extracellular side of the membrane. N11 is a glycosylation site (N-linked (GlcNAc...) asparagine). The helical transmembrane segment at 47-67 (LIEVQIILILAYCSIILLGVV) threads the bilayer. Residues 68 to 87 (GNSLVIHVVIKFKSMRTVTN) lie on the Cytoplasmic side of the membrane. Residues 88-108 (FFIANLAVADLLVNTLCLPFT) traverse the membrane as a helical segment. At 109-125 (LTYTLMGEWKMGPVLCH) the chain is on the extracellular side. C124 and C204 form a disulfide bridge. A helical transmembrane segment spans residues 126-146 (LVPYAQGLAVQVSTITLTVIA). The Cytoplasmic portion of the chain corresponds to 147–166 (LDRHRCIVYHLESKISKRIS). Residues 167–187 (FLIIGLAWGISALLASPLAIF) form a helical membrane-spanning segment. Topologically, residues 188–217 (REYSLIEIIPDFEIVACTEKWPGEEKSIYG) are extracellular. Residues 218–238 (TVYSLSSLLILYVLPLGIISF) form a helical membrane-spanning segment. Over 239-269 (SYARIWSKLKNHVSPGGVNDHYHQRRQKTTK) the chain is Cytoplasmic. Residues 270–290 (MLVCVVVVFAVSWLPLHAFQL) form a helical membrane-spanning segment. Residues 291-305 (AVDIDSQVLDLKEYK) are Extracellular-facing. Residues 306-326 (LIFTVFHIIAMCSTFANPLLY) form a helical membrane-spanning segment. Residues 327 to 382 (GWMNSNYRKAFLSAFRCEQRLDAIHSEVSMTSKAKKNLEATKNGGPDDSFTEATNV) are Cytoplasmic-facing. Residue C343 is the site of S-palmitoyl cysteine attachment. Residues 363–382 (NLEATKNGGPDDSFTEATNV) are disordered.

Belongs to the G-protein coupled receptor 1 family.

The protein resides in the cell membrane. Its function is as follows. Receptor for neuropeptide Y and peptide YY. The sequence is that of Neuropeptide Y receptor type 2 (NPY2R) from Sus scrofa (Pig).